We begin with the raw amino-acid sequence, 598 residues long: Centrosomal protein of 70 kDa (598 aa).

The span at 16–38 (DSTKEPLSTVTSQAQDSSLSANR) shows a compositional bias: polar residues. Residues 16–43 (DSTKEPLSTVTSQAQDSSLSANRPVTEK) are disordered. 2 coiled-coil regions span residues 99–210 (TRQQ…EEDR) and 255–317 (TYKG…NIKL). The stretch at 484 to 517 (NGVYPRMNEVYARLGEMNNAVRNLQELLGLDSSS) is one TPR repeat.

In terms of assembly, directly interacts with tubulin-gamma; this interaction determines centrosomal localization.

The protein resides in the cytoplasm. It localises to the cytoskeleton. The protein localises to the microtubule organizing center. It is found in the centrosome. In terms of biological role, plays a role in the organization of both preexisting and nascent microtubules in interphase cells. During mitosis, required for the organization and orientation of the mitotic spindle. The chain is Centrosomal protein of 70 kDa (Cep70) from Rattus norvegicus (Rat).